Here is a 328-residue protein sequence, read N- to C-terminus: BRISC and BRCA1-A complex member 1 (328 aa).

Positions Met1–Thr13 are enriched in polar residues. The interval Met1–Gln84 is disordered. A compositionally biased stretch (low complexity) spans Pro64–Asn74. The tract at residues Val96–Leu297 is VWFA-like.

The protein belongs to the BABAM1 family. In terms of assembly, component of the ARISC complex, at least composed of uimc1/rap80, abraxas1, brcc3/brcc36, BABAM2 and babam1/nba1. Component of the BRCA1-A complex, at least composed of brca1, bard1, uimc1/rap80, abraxas1, brcc3/brcc36, BABAM2 and babam1/nba1. In the BRCA1-A complex, interacts directly with abraxas1 and BABAM2. Component of the BRISC complex, at least composed of abraxas2, brcc3/brcc36, babam2 and babam1/nba1.

It is found in the cytoplasm. Its subcellular location is the nucleus. Its function is as follows. Component of the BRCA1-A complex, a complex that specifically recognizes 'Lys-63'-linked ubiquitinated histones H2A and H2AX at DNA lesions sites, leading to target the BRCA1-BARD1 heterodimer to sites of DNA damage at double-strand breaks (DSBs). The BRCA1-A complex also possesses deubiquitinase activity that specifically removes 'Lys-63'-linked ubiquitin on histones H2A and H2AX. In the BRCA1-A complex, it is required for the complex integrity and its localization at DSBs. Component of the BRISC complex, a multiprotein complex that specifically cleaves 'Lys-63'-linked ubiquitin in various substrates. In these 2 complexes, it is probably required to maintain the stability of babam2 and help the 'Lys-63'-linked deubiquitinase activity mediated by brcc3/brcc36 component. The BRISC complex is required for normal mitotic spindle assembly and microtubule attachment to kinetochores via its role in deubiquitinating numa1. Plays a role in interferon signaling via its role in the deubiquitination of the interferon receptor ifnar1; deubiquitination increases ifnar1 activity by enhancing its stability and cell surface expression. Down-regulates the response to bacterial lipopolysaccharide (LPS) via its role in ifnar1 deubiquitination. The chain is BRISC and BRCA1-A complex member 1 (babam1) from Xenopus laevis (African clawed frog).